The sequence spans 462 residues: Glycogen synthase 1 (462 aa).

Residue arginine 6 coordinates ADP-alpha-D-glucose.

It belongs to the glycosyltransferase 1 family. Bacterial/plant glycogen synthase subfamily.

The enzyme catalyses [(1-&gt;4)-alpha-D-glucosyl](n) + ADP-alpha-D-glucose = [(1-&gt;4)-alpha-D-glucosyl](n+1) + ADP + H(+). The protein operates within glycan biosynthesis; glycogen biosynthesis. Its function is as follows. Synthesizes alpha-1,4-glucan chains using ADP-glucose. The chain is Glycogen synthase 1 from Bradyrhizobium diazoefficiens (strain JCM 10833 / BCRC 13528 / IAM 13628 / NBRC 14792 / USDA 110).